The following is a 1231-amino-acid chain: uncharacterized protein (1231 aa).

Disordered stretches follow at residues 171–197, 210–259, and 389–547; these read LKPD…QHDD, DESF…HLPT, and ASPR…RSSR. Residues 440-450 show a composition bias toward basic residues; it reads RSRHSHKRRSI. Residues Ser449, Ser451, Ser453, and Ser455 each carry the phosphoserine modification. Residues 458 to 502 are compositionally biased toward basic residues; the sequence is RGGRRAVRRSRSRSPRRSYNRGSTRSRSRSMRHRSRSPAHYRGRG. A compositionally biased stretch (basic and acidic residues) spans 503–541; sequence RGREPASKERGSSSRDFGGRHSLQRERERSSEYYHRNEG. Tyr549 is subject to Phosphotyrosine. Disordered stretches follow at residues 570–591, 950–981, and 1058–1203; these read KTSS…ASEP, PNLD…DDEE, and TLSK…PPFN. Ser573 and Ser589 each carry phosphoserine. Thr970 is subject to Phosphothreonine. A Phosphoserine modification is found at Ser972. Over residues 1076-1103 the composition is skewed to polar residues; that stretch reads YMMNQQHGAPNAQNAPNLGQNPGQNLGQ. The segment covering 1118 to 1127 has biased composition (low complexity); that stretch reads QQQQQQQQQQ. The span at 1178 to 1203 shows a compositional bias: pro residues; it reads PPGPGGYVGPPPNPWASNVPPQPPFN.

This is an uncharacterized protein from Drosophila melanogaster (Fruit fly).